The chain runs to 193 residues: Xanthine phosphoribosyltransferase (193 aa).

Positions 20 and 27 each coordinate xanthine. 128 to 132 (ANGQA) serves as a coordination point for 5-phospho-alpha-D-ribose 1-diphosphate. K156 provides a ligand contact to xanthine.

Belongs to the purine/pyrimidine phosphoribosyltransferase family. Xpt subfamily. In terms of assembly, homodimer.

Its subcellular location is the cytoplasm. The catalysed reaction is XMP + diphosphate = xanthine + 5-phospho-alpha-D-ribose 1-diphosphate. It functions in the pathway purine metabolism; XMP biosynthesis via salvage pathway; XMP from xanthine: step 1/1. In terms of biological role, converts the preformed base xanthine, a product of nucleic acid breakdown, to xanthosine 5'-monophosphate (XMP), so it can be reused for RNA or DNA synthesis. The sequence is that of Xanthine phosphoribosyltransferase from Streptococcus pyogenes serotype M49 (strain NZ131).